The sequence spans 107 residues: Heme-degrading monooxygenase (107 aa).

In terms of domain architecture, ABM spans 2–94 (IIVTNTAKIT…YILDNKIAYY (93 aa)). Residue N6 coordinates Fe cation. Residue H76 coordinates heme.

Belongs to the antibiotic biosynthesis monooxygenase family. Heme-degrading monooxygenase IsdG subfamily. As to quaternary structure, homodimer.

It is found in the cytoplasm. It carries out the reaction heme b + 3 reduced [NADPH--hemoprotein reductase] + 3 O2 = biliverdin IXalpha + CO + Fe(2+) + 3 oxidized [NADPH--hemoprotein reductase] + 3 H2O + H(+). Functionally, allows bacterial pathogens to use the host heme as an iron source. Catalyzes the oxidative degradation of the heme macrocyclic porphyrin ring to the biliverdin in the presence of a suitable electron donor such as ascorbate or NADPH--cytochrome P450 reductase, with subsequent release of free iron. The chain is Heme-degrading monooxygenase from Bacillus cereus (strain ATCC 14579 / DSM 31 / CCUG 7414 / JCM 2152 / NBRC 15305 / NCIMB 9373 / NCTC 2599 / NRRL B-3711).